The sequence spans 181 residues: TATA-box-binding protein (181 aa).

A run of 2 repeats spans residues 8–84 (IENI…VDLM) and 99–175 (IQNI…YDRL).

Belongs to the TBP family.

Functionally, general factor that plays a role in the activation of archaeal genes transcribed by RNA polymerase. Binds specifically to the TATA box promoter element which lies close to the position of transcription initiation. This chain is TATA-box-binding protein, found in Methanobrevibacter smithii (strain ATCC 35061 / DSM 861 / OCM 144 / PS).